Consider the following 330-residue polypeptide: Phenylalanine--tRNA ligase alpha subunit (330 aa).

Position 257 (glutamate 257) interacts with Mg(2+).

It belongs to the class-II aminoacyl-tRNA synthetase family. Phe-tRNA synthetase alpha subunit type 1 subfamily. As to quaternary structure, tetramer of two alpha and two beta subunits. The cofactor is Mg(2+).

The protein localises to the cytoplasm. The catalysed reaction is tRNA(Phe) + L-phenylalanine + ATP = L-phenylalanyl-tRNA(Phe) + AMP + diphosphate + H(+). This chain is Phenylalanine--tRNA ligase alpha subunit, found in Acaryochloris marina (strain MBIC 11017).